The primary structure comprises 490 residues: Monocarboxylate transporter 3 (490 aa).

The Cytoplasmic segment spans residues 1-14; sequence MGAGGPRRGAGPPD. A helical transmembrane segment spans residues 15-35; sequence GGWGWVVLGACFVITGFAYGF. Topologically, residues 36-58 are extracellular; it reads PKAVSVFFRELKRDFGAGYSDTA. The helical transmembrane segment at 59-79 threads the bilayer; it reads WVSSIMLAMLYGTGPLSSILV. Residues 80 to 85 are Cytoplasmic-facing; the sequence is TRFGCR. The helical transmembrane segment at 86–106 threads the bilayer; it reads PVMLAGGLLASAGMILASFAS. Topologically, residues 107–115 are extracellular; the sequence is RLLELYLTA. The chain crosses the membrane as a helical span at residues 116 to 136; it reads GVLTGLGLALNFQPSLIMLGL. Residues 137-147 lie on the Cytoplasmic side of the membrane; the sequence is YFERRRPLANG. A helical membrane pass occupies residues 148–168; that stretch reads LAAAGSPVFLSTLSPLGQLLG. Over 169–172 the chain is Extracellular; that stretch reads ERFG. A helical transmembrane segment spans residues 173-193; the sequence is WRGGFLLFGGLLLHCCACGAV. At 194-230 the chain is on the cytoplasmic side; sequence MRPPPGPQPRPDPAPPGGRARHRQLLDLAVCTDRTFM. Residues 231–251 form a helical membrane-spanning segment; the sequence is VYMVTKFLMALGLFVPAILLV. Over 252-257 the chain is Extracellular; sequence NYAKDA. A helical transmembrane segment spans residues 258 to 278; the sequence is GVPDAEAAFLLSIVGFVDIVA. The Cytoplasmic segment spans residues 279-293; it reads RPACGALAGLGRLRP. The chain crosses the membrane as a helical span at residues 294–314; sequence HVPYLFSLALLANGLTDLISA. Over 315 to 318 the chain is Extracellular; that stretch reads RARS. A helical membrane pass occupies residues 319–339; it reads YGTLVAFCIAFGLSYGMVGAL. Residues 340-352 are Cytoplasmic-facing; that stretch reads QFEVLMATVGAPR. A helical membrane pass occupies residues 353–373; it reads FPSALGLVLLVEAVAVLIGPP. Residues 374-386 are Extracellular-facing; that stretch reads SAGRLVDALKNYE. Residues 387 to 407 form a helical membrane-spanning segment; it reads IIFYLAGSEVVLAGVFMAVTT. Residues 408–490 are Cytoplasmic-facing; sequence YCCQRCSKDI…GGHEAHGQNA (83 aa). The disordered stretch occupies residues 419–490; the sequence is PGPSAEGGTS…GGHEAHGQNA (72 aa). 2 basolateral sorting signal regions span residues 426 to 460 and 461 to 480; these read GTSD…VLSP and RAGS…HESV. The segment covering 475 to 490 has biased composition (basic and acidic residues); it reads LSHESVGGHEAHGQNA.

It belongs to the major facilitator superfamily. Monocarboxylate porter (TC 2.A.1.13) family. In terms of tissue distribution, retinal pigment epithelium.

It localises to the basolateral cell membrane. The catalysed reaction is (S)-lactate(in) + H(+)(in) = (S)-lactate(out) + H(+)(out). Probable retinal pigment epithelium (RPE)-specific proton-coupled L-lactate transporter. May facilitate transport of lactate and H(+) out of the retina and could therefore play a role in pH and ion homeostasis of the outer retina. The chain is Monocarboxylate transporter 3 (Slc16a8) from Rattus norvegicus (Rat).